The following is a 469-amino-acid chain: Uronate isomerase (469 aa).

Belongs to the metallo-dependent hydrolases superfamily. Uronate isomerase family.

The enzyme catalyses D-glucuronate = D-fructuronate. It carries out the reaction aldehydo-D-galacturonate = keto-D-tagaturonate. It functions in the pathway carbohydrate metabolism; pentose and glucuronate interconversion. This is Uronate isomerase from Rhizobium meliloti (strain 1021) (Ensifer meliloti).